The primary structure comprises 285 residues: Bifunctional protein FolD (285 aa).

Residues 165–167 (GAS) and I232 contribute to the NADP(+) site.

It belongs to the tetrahydrofolate dehydrogenase/cyclohydrolase family. Homodimer.

It carries out the reaction (6R)-5,10-methylene-5,6,7,8-tetrahydrofolate + NADP(+) = (6R)-5,10-methenyltetrahydrofolate + NADPH. The catalysed reaction is (6R)-5,10-methenyltetrahydrofolate + H2O = (6R)-10-formyltetrahydrofolate + H(+). The protein operates within one-carbon metabolism; tetrahydrofolate interconversion. In terms of biological role, catalyzes the oxidation of 5,10-methylenetetrahydrofolate to 5,10-methenyltetrahydrofolate and then the hydrolysis of 5,10-methenyltetrahydrofolate to 10-formyltetrahydrofolate. The sequence is that of Bifunctional protein FolD from Sulfurihydrogenibium sp. (strain YO3AOP1).